Here is a 657-residue protein sequence, read N- to C-terminus: NADH-quinone oxidoreductase subunit L (657 aa).

The next 17 helical transmembrane spans lie at 5-25 (NICI…GLFL), 32-52 (LAQV…LIIF), 89-109 (IMFI…LGYM), 114-134 (GIIR…MLVS), 138-158 (FLQL…LIGF), 172-192 (AFII…TIIV), 214-234 (IFLH…GCMG), 253-273 (TPVS…FLVA), 285-305 (ILQF…SIAI), 313-333 (IIAY…GVSA), 339-359 (FHLV…GSVI), 381-401 (YGNF…AGFY), 416-436 (FMFI…MKII), 465-485 (LILL…LLAM), 511-531 (LYIK…GIYL), 580-600 (EIYN…FYLG), and 632-652 (VFNY…YFVW).

The protein belongs to the complex I subunit 5 family.

It is found in the cell membrane. The enzyme catalyses a quinone + NADH + 5 H(+)(in) = a quinol + NAD(+) + 4 H(+)(out). Functionally, NDH-1 shuttles electrons from NADH, via FMN and iron-sulfur (Fe-S) centers, to quinones in the respiratory chain. Couples the redox reaction to proton translocation (for every two electrons transferred, four hydrogen ions are translocated across the cytoplasmic membrane), and thus conserves the redox energy in a proton gradient. The chain is NADH-quinone oxidoreductase subunit L (nuoL) from Rickettsia conorii (strain ATCC VR-613 / Malish 7).